The following is a 453-amino-acid chain: tRNA modification GTPase MnmE (453 aa).

Arg-22, Glu-79, and Lys-119 together coordinate (6S)-5-formyl-5,6,7,8-tetrahydrofolate. Positions 215–376 constitute a TrmE-type G domain; that stretch reads GMKVVIAGRP…LKQHLKSLMG (162 aa). A K(+)-binding site is contributed by Asn-225. Residues 225–230, 244–250, 269–272, and 334–337 each bind GTP; these read NAGKSS, TEIAGTT, DTAG, and NKAD. Residue Ser-229 coordinates Mg(2+). Thr-244, Ile-246, and Thr-249 together coordinate K(+). Residue Thr-250 coordinates Mg(2+). Lys-453 is a binding site for (6S)-5-formyl-5,6,7,8-tetrahydrofolate.

Belongs to the TRAFAC class TrmE-Era-EngA-EngB-Septin-like GTPase superfamily. TrmE GTPase family. In terms of assembly, homodimer. Heterotetramer of two MnmE and two MnmG subunits. K(+) serves as cofactor.

Its subcellular location is the cytoplasm. Its function is as follows. Exhibits a very high intrinsic GTPase hydrolysis rate. Involved in the addition of a carboxymethylaminomethyl (cmnm) group at the wobble position (U34) of certain tRNAs, forming tRNA-cmnm(5)s(2)U34. The chain is tRNA modification GTPase MnmE from Shewanella frigidimarina (strain NCIMB 400).